The sequence spans 246 residues: tRNA pseudouridine synthase A (246 aa).

The active-site Nucleophile is the Asp52. Tyr112 provides a ligand contact to substrate.

This sequence belongs to the tRNA pseudouridine synthase TruA family. As to quaternary structure, homodimer.

It carries out the reaction uridine(38/39/40) in tRNA = pseudouridine(38/39/40) in tRNA. Formation of pseudouridine at positions 38, 39 and 40 in the anticodon stem and loop of transfer RNAs. In Pelagibacter ubique (strain HTCC1062), this protein is tRNA pseudouridine synthase A.